Here is a 214-residue protein sequence, read N- to C-terminus: Cytochrome b (214 aa).

4 consecutive transmembrane segments (helical) span residues 31–51, 75–96, 111–131, and 176–196; these read FGSM…FLAI, WIMQ…YIHI, WLSG…GYVL, and FFAL…IHIL. H81 and H95 together coordinate heme b. The heme b site is built by H180 and H194. H199 is a binding site for a ubiquinone.

This sequence belongs to the cytochrome b family. In terms of assembly, the cytochrome bc1 complex contains 3 respiratory subunits (MT-CYB, CYC1 and UQCRFS1), 2 core proteins (UQCRC1 and UQCRC2) and probably 6 low-molecular weight proteins. The cofactor is heme b.

Its subcellular location is the mitochondrion inner membrane. In terms of biological role, component of the ubiquinol-cytochrome c reductase complex (complex III or cytochrome b-c1 complex) that is part of the mitochondrial respiratory chain. The b-c1 complex mediates electron transfer from ubiquinol to cytochrome c. Contributes to the generation of a proton gradient across the mitochondrial membrane that is then used for ATP synthesis. In Bothrops bilineatus (Green jararaca), this protein is Cytochrome b (MT-CYB).